The following is a 689-amino-acid chain: FACT complex subunit ssrp1-B (689 aa).

Disordered regions lie at residues D434–T565 and K592–D689. The span at E461–L477 shows a compositional bias: acidic residues. Basic and acidic residues-rich tracts occupy residues D478–S491, I523–E532, E538–R563, and S601–K628. The HMG box DNA-binding region spans P561–K627. The span at G638–G650 shows a compositional bias: polar residues.

This sequence belongs to the SSRP1 family. Component of the FACT complex, a stable heterodimer of hmg-3 and spt-16. The FACT complex may also include hmg-4 instead of hmg-3. As to expression, expressed in the germline.

The protein resides in the nucleus. It is found in the chromosome. Functionally, component of the FACT complex, a general chromatin factor that acts to reorganize nucleosomes. The FACT complex is involved in multiple processes that require DNA as a template such as mRNA elongation, DNA replication and DNA repair. During transcription elongation the FACT complex acts as a histone chaperone that both destabilizes and restores nucleosomal structure. It facilitates the passage of RNA polymerase II and transcription by promoting the dissociation of one histone H2A-H2B dimer from the nucleosome, then subsequently promotes the reestablishment of the nucleosome following the passage of RNA polymerase II. Binds specifically to double-stranded DNA. In embryos, may function redundantly with hmg-4 to promote cell cycle progression and development of the anterior pharynx. In the germline, acts non-redundantly with hmg-4 to play a role in oocyte development. The polypeptide is FACT complex subunit ssrp1-B (Caenorhabditis elegans).